We begin with the raw amino-acid sequence, 418 residues long: Nucleoredoxin (418 aa).

One can recognise a Thioredoxin domain in the interval 109-309 (KYKVTSIPSL…ESNAVQLHEG (201 aa)).

This sequence belongs to the nucleoredoxin family.

The protein localises to the cytoplasm. It localises to the cytosol. It is found in the nucleus. The enzyme catalyses [protein]-dithiol + NAD(+) = [protein]-disulfide + NADH + H(+). It catalyses the reaction [protein]-dithiol + NADP(+) = [protein]-disulfide + NADPH + H(+). Functions as a redox-dependent negative regulator of the Wnt signaling pathway. In Danio rerio (Zebrafish), this protein is Nucleoredoxin (nxn).